A 654-amino-acid chain; its full sequence is Probable potassium transport system protein Kup (654 aa).

The next 13 helical transmembrane spans lie at 17 to 37 (GILVTLGIIYGDIGTSPLYVM), 40 to 60 (IIGLHTIKPEVVLGGISAIFW), 71 to 91 (VLITLSADNHGEGGIFALYAL), 99 to 119 (WLIIPAIIGGSALLADGIITP), 137 to 157 (INTVPIVIAILVVLFTIQQFG), 164 to 184 (FFAPMMMIWFAMLAILGILQI), 202 to 222 (LLSIHPDGFYVLGFVFLCTTG), 240 to 260 (ISWIFVKIALLLNYFGQGAYL), 281 to 301 (LVMPEWFQPFGIVISTMAAVI), 338 to 358 (IYIPSINWLLLAGCIGIVLHF), 369 to 389 (GLAIVLCMIMTTILLTYFMIL), 394 to 414 (WFIIAPLILLYLVIEFSFLIA), and 423 to 443 (GYVTLIIASALTFIMSIWYTA).

Belongs to the HAK/KUP transporter (TC 2.A.72) family.

Its subcellular location is the cell inner membrane. It carries out the reaction K(+)(in) + H(+)(in) = K(+)(out) + H(+)(out). Its function is as follows. Transport of potassium into the cell. Likely operates as a K(+):H(+) symporter. This is Probable potassium transport system protein Kup from Flavobacterium psychrophilum (strain ATCC 49511 / DSM 21280 / CIP 103535 / JIP02/86).